The sequence spans 138 residues: RuBisCO chaperone RbcX (138 aa).

Residues 118-138 (VDNFPSETSNGESNNNDSPPS) form a disordered region. Polar residues predominate over residues 122–138 (PSETSNGESNNNDSPPS).

The protein belongs to the RbcX family. In terms of assembly, homodimer. Interacts with the exposed C-terminal peptide of RbcL via its central cleft, contacts a second RbcL monomer via its peripheral polar surface.

The protein resides in the carboxysome. It localises to the cytoplasm. In terms of biological role, an RbcL-specific chaperone. The central cleft of the RbcX homodimer (RbcX2) binds the C-terminus of an RbcL monomer, stabilizing the C-terminus and probably preventing its reassociation with chaperonin GroEL-ES. At the same time the peripheral region of RbcX2 binds a second RbcL monomer, bridging the RbcL homodimers in the correct orientation. The RbcX2(2)-bound RbcL dimers then assemble into the RbcL8 core (RbcL8-(RbcX2)8). RbcS binding triggers the release of RbcX2. In Synechocystis sp. (strain ATCC 27184 / PCC 6803 / Kazusa), this protein is RuBisCO chaperone RbcX.